We begin with the raw amino-acid sequence, 216 residues long: Small ribosomal subunit protein uS3c (216 aa).

The 76-residue stretch at 43 to 118 (IKNYLQKNMR…KLNIAITRIT (76 aa)) folds into the KH type-2 domain.

It belongs to the universal ribosomal protein uS3 family. Part of the 30S ribosomal subunit.

Its subcellular location is the plastid. The protein resides in the chloroplast. The sequence is that of Small ribosomal subunit protein uS3c (rps3) from Eucalyptus globulus subsp. globulus (Tasmanian blue gum).